A 403-amino-acid polypeptide reads, in one-letter code: Acetylornithine aminotransferase (403 aa).

Pyridoxal 5'-phosphate contacts are provided by residues 107–108 (GA) and Phe140. N(2)-acetyl-L-ornithine is bound at residue Arg143. 225 to 228 (DEVQ) contacts pyridoxal 5'-phosphate. Lys254 is subject to N6-(pyridoxal phosphate)lysine. Ser282 provides a ligand contact to N(2)-acetyl-L-ornithine. Thr283 lines the pyridoxal 5'-phosphate pocket.

Belongs to the class-III pyridoxal-phosphate-dependent aminotransferase family. ArgD subfamily. As to quaternary structure, homodimer. It depends on pyridoxal 5'-phosphate as a cofactor.

It is found in the cytoplasm. The catalysed reaction is N(2)-acetyl-L-ornithine + 2-oxoglutarate = N-acetyl-L-glutamate 5-semialdehyde + L-glutamate. It functions in the pathway amino-acid biosynthesis; L-arginine biosynthesis; N(2)-acetyl-L-ornithine from L-glutamate: step 4/4. In Vibrio vulnificus (strain YJ016), this protein is Acetylornithine aminotransferase.